The sequence spans 267 residues: 27 kDa core protein (267 aa).

It belongs to the chordopoxvirinae D3 family.

The protein resides in the virion. Its function is as follows. Late protein which is part of a large complex required for early virion morphogenesis. This complex participates in the formation of virosomes and the incorporation of virosomal contents into nascent immature virions. The protein is 27 kDa core protein of Canarypox virus (CNPV).